Here is a 357-residue protein sequence, read N- to C-terminus: Protein pelota homolog (357 aa).

It belongs to the eukaryotic release factor 1 family. Pelota subfamily. In terms of assembly, monomer. It depends on a divalent metal cation as a cofactor.

It is found in the cytoplasm. Functionally, may function in recognizing stalled ribosomes, interact with stem-loop structures in stalled mRNA molecules, and effect endonucleolytic cleavage of the mRNA. May play a role in the release non-functional ribosomes and degradation of damaged mRNAs. Has endoribonuclease activity. The polypeptide is Protein pelota homolog (Thermococcus onnurineus (strain NA1)).